The primary structure comprises 106 residues: ER membrane protein complex subunit 5 (106 aa).

Over 1 to 12 the chain is Cytoplasmic; the sequence is MESSTINAKKIS. Residues 13 to 33 traverse the membrane as a helical segment; that stretch reads VLLTLFSIIGYTAYSAHESIL. Residues 34–46 lie on the Lumenal side of the membrane; sequence EIRQDGKLPLDIK. Residues 47-67 form a helical membrane-spanning segment; sequence CEVILVTLLFTFTTVIIASPL. The Cytoplasmic portion of the chain corresponds to 68–106; the sequence is RSIQLNKWSHQRSDLAFLNSRTNFLRIKELKEKIEKVKN.

This sequence belongs to the membrane magnesium transporter (TC 1.A.67) family. Component of the ER membrane protein complex (EMC).

It localises to the endoplasmic reticulum membrane. The EMC seems to be required for efficient folding of proteins in the endoplasmic reticulum (ER). The protein is ER membrane protein complex subunit 5 (emc5) of Schizosaccharomyces pombe (strain 972 / ATCC 24843) (Fission yeast).